Consider the following 107-residue polypeptide: Ferredoxin-1 (107 aa).

2 consecutive 4Fe-4S ferredoxin-type domains span residues Ala2–Pro30 and Asn31–Glu60. Cys9 and Cys17 together coordinate [3Fe-4S] cluster. Residues Cys21, Cys40, Cys43, and Cys46 each contribute to the [4Fe-4S] cluster site. [3Fe-4S] cluster is bound at residue Cys50. The disordered stretch occupies residues Glu84–Arg107. A compositionally biased stretch (basic and acidic residues) spans Asp96–Arg107.

Requires [4Fe-4S] cluster as cofactor. It depends on [3Fe-4S] cluster as a cofactor.

In terms of biological role, ferredoxins are iron-sulfur proteins that transfer electrons in a wide variety of metabolic reactions. This ferredoxin could play a role in regulating gene expression by interacting directly with DNA. In Azotobacter vinelandii, this protein is Ferredoxin-1 (fdxA).